Consider the following 469-residue polypeptide: Acyltransferase clz18 (469 aa).

7 consecutive transmembrane segments (helical) span residues Gly-21 to Asp-41, Leu-70 to Phe-90, Leu-134 to Phe-154, Ile-253 to Trp-273, Gly-346 to Leu-366, Ile-391 to Trp-411, and Val-424 to Phe-444.

This sequence belongs to the acyltransferase 3 family.

It localises to the membrane. It participates in secondary metabolite biosynthesis. Its function is as follows. Acyltransferase; part of the gene cluster that mediates the biosynthesis of squalestatin S1 (SQS1, also known as zaragozic acid A), a heavily oxidized fungal polyketide that offers potent cholesterol lowering activity by targeting squalene synthase (SS). SQS1 is composed of a 2,8-dioxobicyclic[3.2.1]octane-3,4,5-tricarboxyclic acid core that is connected to two lipophilic polyketide arms. These initial steps feature the priming of an unusual benzoic acid starter unit onto the highly reducing polyketide synthase clz14, followed by oxaloacetate extension and product release to generate a tricarboxylic acid containing product. The phenylalanine ammonia lyase (PAL) clz10 and the acyl-CoA ligase clz12 are involved in transforming phenylalanine into benzoyl-CoA. The citrate synthase-like protein clz17 is involved in connecting the C-alpha-carbons of the hexaketide chain and oxaloacetate to afford the tricarboxylic acid unit. The potential hydrolytic enzymes, clz11 and clz13, are in close proximity to pks2 and may participate in product release. On the other side, the tetraketide arm is synthesized by a the squalestatin tetraketide synthase clz2 and enzymatically esterified to the core in the last biosynthetic step, by the acetyltransferase clz6. The biosynthesis of the tetraketide must involve 3 rounds of chain extension. After the first and second rounds methyl-transfer occurs, and in all rounds of extension the ketoreductase and dehydratase are active. The enoyl reductase and C-MeT of clz2 are not active in the final round of extension. The acetyltransferase clz6 appears to have a broad substrate selectivity for its acyl CoA substrate, allowing the in vitro synthesis of novel squalestatins. The biosynthesis of SQS1 requires several oxidative steps likely performed by oxidoreductases clz3, clz15 and clz16. Finally, in support of the identification of the cluster as being responsible for SQS1 production, the cluster contains a gene encoding a putative squalene synthase (SS) clz20, suggesting a likely mechanism for self-resistance. The polypeptide is Acyltransferase clz18 (Cochliobolus lunatus (Filamentous fungus)).